We begin with the raw amino-acid sequence, 180 residues long: Signal peptidase complex subunit 3 (180 aa).

Topologically, residues 1 to 12 (MHNLLSRANALL) are cytoplasmic. A helical; Signal-anchor for type II membrane protein transmembrane segment spans residues 13 to 33 (AFTLWVMAAVTAACFLSTVFL). The Lumenal segment spans residues 34-180 (DYTVPTKLTV…PTTYTTTRRS (147 aa)). A glycan (N-linked (GlcNAc...) asparagine) is linked at asparagine 141.

This sequence belongs to the SPCS3 family. Component of the signal peptidase complex (SPC) composed of a catalytic subunit sec-11 and three accessory subunits spcs-1, spcs-2 and spcs-3. The complex induces a local thinning of the ER membrane which is used to measure the length of the signal peptide (SP) h-region of protein substrates. This ensures the selectivity of the complex towards h-regions shorter than 18-20 amino acids.

The protein localises to the endoplasmic reticulum membrane. In terms of biological role, essential component of the signal peptidase complex (SPC) which catalyzes the cleavage of N-terminal signal sequences from nascent proteins as they are translocated into the lumen of the endoplasmic reticulum. Essential for the SPC catalytic activity, possibly by stabilizing and positioning the active center of the complex close to the lumenal surface. The polypeptide is Signal peptidase complex subunit 3 (Caenorhabditis elegans).